Consider the following 861-residue polypeptide: Alpha-actinin A (861 aa).

Residues 1-239 form an actin-binding region; the sequence is MSEEPTPVSG…VMTYVAQYYH (239 aa). 2 consecutive Calponin-homology (CH) domains span residues 22–127 and 136–242; these read ITQK…LRFA and LSAK…HHFS. Spectrin repeat units follow at residues 240–365, 366–480, 481–601, and 602–714; these read HFSA…ALEK, AEQE…TGVK, SSAE…EERK, and VQLA…EQVV. EF-hand domains follow at residues 729–764 and 765–800; these read EELS…IGDE and LTEE…SRKG. 10 residues coordinate Ca(2+): Asp-742, Asp-744, Asp-746, Lys-748, Glu-753, Asp-778, Asp-780, Asn-782, Thr-784, and Glu-789.

Belongs to the alpha-actinin family. Homodimer; antiparallel.

The protein resides in the cytoplasm. The protein localises to the cell cortex. Its subcellular location is the contractile vacuole. It localises to the cytoplasmic vesicle. It is found in the phagosome. Its function is as follows. F-actin cross-linking protein which is thought to anchor actin to a variety of intracellular structures. This is a bundling protein. Increases the actin-stimulated ATPase activity of myosin. Involved in vegetative cell growth, phagocytosis, motility and development, probably through stabilization of the actin network in the cortical cytoskeleton. The polypeptide is Alpha-actinin A (abpA) (Dictyostelium discoideum (Social amoeba)).